Reading from the N-terminus, the 338-residue chain is RNA 3'-terminal phosphate cyclase (338 aa).

Residues Gln103 and Tyr283–Gln287 each bind ATP. His308 (tele-AMP-histidine intermediate) is an active-site residue.

It belongs to the RNA 3'-terminal cyclase family. Type 1 subfamily.

It localises to the cytoplasm. The catalysed reaction is a 3'-end 3'-phospho-ribonucleotide-RNA + ATP = a 3'-end 2',3'-cyclophospho-ribonucleotide-RNA + AMP + diphosphate. In terms of biological role, catalyzes the conversion of 3'-phosphate to a 2',3'-cyclic phosphodiester at the end of RNA. The mechanism of action of the enzyme occurs in 3 steps: (A) adenylation of the enzyme by ATP; (B) transfer of adenylate to an RNA-N3'P to produce RNA-N3'PP5'A; (C) and attack of the adjacent 2'-hydroxyl on the 3'-phosphorus in the diester linkage to produce the cyclic end product. The biological role of this enzyme is unknown but it is likely to function in some aspects of cellular RNA processing. This is RNA 3'-terminal phosphate cyclase from Shigella boydii serotype 18 (strain CDC 3083-94 / BS512).